A 613-amino-acid polypeptide reads, in one-letter code: Secretogranin-2 (613 aa).

The signal sequence occupies residues 1–27; that stretch reads MAEAKTHWLGAVLSLIPLIFLLSEAEA. Residues 28-30 constitute a propeptide that is removed on maturation; sequence ASF. Disordered stretches follow at residues 67 to 105 and 119 to 146; these read QQAH…DSLS and QAEN…PMDM. The span at 92–105 shows a compositional bias: basic and acidic residues; it reads ENGDLPESSRDSLS. Tyr-150 is modified (sulfotyrosine). Residues Ser-173, Ser-267, Ser-428, Ser-528, Ser-551, and Ser-552 each carry the phosphoserine modification. The segment covering 257-283 has biased composition (basic and acidic residues); sequence ESQTQEEVRDSKENADKTEQINDEMKR. Positions 257 to 287 are disordered; that stretch reads ESQTQEEVRDSKENADKTEQINDEMKRSGQL. Over residues 546–557 the composition is skewed to basic and acidic residues; it reads HLSQHSSQETDK. Residues 546 to 580 form a disordered region; it reads HLSQHSSQETDKLASVSKRLPVGTPKSDDTPNRPY.

This sequence belongs to the chromogranin/secretogranin protein family. In terms of assembly, interacts with Secretogranin III/SCG3. Highest levels detected in anterior pituitary followed by adrenal medulla and posterior pituitary (at protein level). In the brain, high levels are found in the hypothalamus, comparable to those present in posterior pituitary with two- to six-fold lower levels present in the other brain regions investigated including caudate nucleus, hippocampus, thalamus and brainstem (at protein level).

The protein localises to the secreted. Functionally, neuroendocrine protein of the granin family that regulates the biogenesis of secretory granules. In Bos taurus (Bovine), this protein is Secretogranin-2 (SCG2).